Reading from the N-terminus, the 596-residue chain is Fc receptor-like protein 5 (596 aa).

Positions 1–26 (MSGSFSPCVVFTQMWLTLLVVTPVNG) are cleaved as a signal peptide. At 27 to 496 (QHEAAQQSVV…MTKNRSVPMA (470 aa)) the chain is on the extracellular side. 5 consecutive Ig-like C2-type domains span residues 34 to 115 (SVVS…VEFS), 106 to 199 (PSMH…NTVV), 207 to 294 (PRPV…TAFI), 296 to 384 (PVQR…SFVS), and 398 to 483 (PVLT…IRIS). Disulfide bonds link Cys-55-Cys-99, Cys-137-Cys-181, and Cys-228-Cys-277. Asn-324 carries an N-linked (GlcNAc...) asparagine glycan. 2 cysteine pairs are disulfide-bonded: Cys-325-Cys-373 and Cys-419-Cys-466. An N-linked (GlcNAc...) asparagine glycan is attached at Asn-436. Residues 497–517 (AGITVGLLIMAVGVFLFYCWF) form a helical membrane-spanning segment. At 518–596 (SRKAGGKPTS…RSRCQMAEKK (79 aa)) the chain is on the cytoplasmic side. Disordered stretches follow at residues 522–544 (GGKPTSDDSRNPSDSEPQEPTYY) and 561–596 (EENVIYTEVRRTQPRQKHADQESESPRSRCQMAEKK). Over residues 577–596 (KHADQESESPRSRCQMAEKK) the composition is skewed to basic and acidic residues.

As to quaternary structure, interacts with CR2. Interacts with CD19. In terms of processing, phosphorylated on cytoplasmic tyrosines; required for interaction with protein tyrosine phosphatases and protein tyrosine kinases. Preferentially expressed in marginal zone B cells.

It is found in the cell membrane. Its function is as follows. Plays an important role in B-cell response to antigen that acts both as a negative or positive coreceptor. Inhibits B-cell receptor (BCR) signaling in the absence of CR2 stimulation but engagement with CR2 and the BCR lead to a superior calcium response compared to CR2 and BCR costimulation. May be involved in B-cell development and differentiation in peripheral lymphoid organs and may be useful markers of B-cell stages. May have an immunoregulatory role in marginal zone B-cells. May play a role in fertilization. The chain is Fc receptor-like protein 5 (Fcrl5) from Mus musculus (Mouse).